The following is a 554-amino-acid chain: MTPLIFVTGGVVSSLGKGIAAASLASILEARGLKVTMMKLDPYINVDPGTMSPFQHGEVYVTDDGAETDLDLGHYERYVRTRLSRKNSVTTGRIYENVIRKERRGDYLGATVQVIPHITDEIRRCIDEATAGFDVALIEIGGTVGDIESLPFLEAIRQVRTERGAEKAMFMHLTLVPYIAAAGELKTKPTQHSVKELRSIGIQPDVLLCRSEQAVPDSERRKIALFTNVSERAVISCPDIDVLYGMPLELLRQGLDELVIVQFKLRDKVAAADLSEWAAVVDAVKHPLDEVTIAVVGKYVDHQDAYKSVAEALRHGGLRQRTKVNLKWLEAQDLERSDMAALQDIDGILVPGGFGDRGFEGKVQTSKFAREHKVPYFGICYGMQAAVVDYARHVADLDAANSTENDRQSPHPVIGLITEWRTATGEVEKRDEKSDLGGTMRLGLQEQRLKPGTLARELYGKDVVAERHRHRYEFNNRYRTQLEDAGLVISGKSMDDTLVEVVELPRDTHPWFLACQAHPEFLSTPRDGHPLFIGFVRAAREKKAGGKLLKEARA.

The tract at residues 1–265 (MTPLIFVTGG…DELVIVQFKL (265 aa)) is amidoligase domain. Ser-13 provides a ligand contact to CTP. Position 13 (Ser-13) interacts with UTP. ATP contacts are provided by residues 14–19 (SLGKGI) and Asp-71. Residues Asp-71 and Glu-139 each coordinate Mg(2+). CTP contacts are provided by residues 146–148 (DIE), 186–191 (KTKPTQ), and Lys-222. UTP is bound by residues 186-191 (KTKPTQ) and Lys-222. Residues 292 to 545 (TIAVVGKYVD…VRAAREKKAG (254 aa)) form the Glutamine amidotransferase type-1 domain. Gly-353 lines the L-glutamine pocket. The Nucleophile; for glutamine hydrolysis role is filled by Cys-380. L-glutamine contacts are provided by residues 381–384 (YGMQ), Glu-404, and Arg-471. Residues His-518 and Glu-520 contribute to the active site.

The protein belongs to the CTP synthase family. As to quaternary structure, homotetramer.

It catalyses the reaction UTP + L-glutamine + ATP + H2O = CTP + L-glutamate + ADP + phosphate + 2 H(+). The enzyme catalyses L-glutamine + H2O = L-glutamate + NH4(+). It carries out the reaction UTP + NH4(+) + ATP = CTP + ADP + phosphate + 2 H(+). Its pathway is pyrimidine metabolism; CTP biosynthesis via de novo pathway; CTP from UDP: step 2/2. Its activity is regulated as follows. Allosterically activated by GTP, when glutamine is the substrate; GTP has no effect on the reaction when ammonia is the substrate. The allosteric effector GTP functions by stabilizing the protein conformation that binds the tetrahedral intermediate(s) formed during glutamine hydrolysis. Inhibited by the product CTP, via allosteric rather than competitive inhibition. In terms of biological role, catalyzes the ATP-dependent amination of UTP to CTP with either L-glutamine or ammonia as the source of nitrogen. Regulates intracellular CTP levels through interactions with the four ribonucleotide triphosphates. This chain is CTP synthase, found in Xanthomonas oryzae pv. oryzae (strain MAFF 311018).